We begin with the raw amino-acid sequence, 270 residues long: Phosphatidylglycerol--prolipoprotein diacylglyceryl transferase (270 aa).

4 consecutive transmembrane segments (helical) span residues 19 to 39 (FPVY…LWLA), 56 to 76 (LVLI…VIFE), 92 to 112 (QGGL…ILFA), and 116 to 136 (GVSF…GQAI). Arg-138 provides a ligand contact to a 1,2-diacyl-sn-glycero-3-phospho-(1'-sn-glycerol). 3 helical membrane-spanning segments follow: residues 178–198 (HPTF…LLAL), 206–226 (GELF…VEGL), and 236–256 (LRIA…FIIV).

It belongs to the Lgt family.

The protein localises to the cell membrane. It catalyses the reaction L-cysteinyl-[prolipoprotein] + a 1,2-diacyl-sn-glycero-3-phospho-(1'-sn-glycerol) = an S-1,2-diacyl-sn-glyceryl-L-cysteinyl-[prolipoprotein] + sn-glycerol 1-phosphate + H(+). It participates in protein modification; lipoprotein biosynthesis (diacylglyceryl transfer). Functionally, catalyzes the transfer of the diacylglyceryl group from phosphatidylglycerol to the sulfhydryl group of the N-terminal cysteine of a prolipoprotein, the first step in the formation of mature lipoproteins. In Bacillus cereus (strain G9842), this protein is Phosphatidylglycerol--prolipoprotein diacylglyceryl transferase.